The sequence spans 175 residues: ATP synthase subunit b (175 aa).

The chain crosses the membrane as a helical span at residues 14–34; it reads LNPNPGLIFWTALTFLIVLVI.

The protein belongs to the ATPase B chain family. F-type ATPases have 2 components, F(1) - the catalytic core - and F(0) - the membrane proton channel. F(1) has five subunits: alpha(3), beta(3), gamma(1), delta(1), epsilon(1). F(0) has four main subunits: a(1), b(2) and c(10-14). The alpha and beta chains form an alternating ring which encloses part of the gamma chain. F(1) is attached to F(0) by a central stalk formed by the gamma and epsilon chains, while a peripheral stalk is formed by the delta and b chains.

The protein resides in the cell inner membrane. Its function is as follows. F(1)F(0) ATP synthase produces ATP from ADP in the presence of a proton or sodium gradient. F-type ATPases consist of two structural domains, F(1) containing the extramembraneous catalytic core and F(0) containing the membrane proton channel, linked together by a central stalk and a peripheral stalk. During catalysis, ATP synthesis in the catalytic domain of F(1) is coupled via a rotary mechanism of the central stalk subunits to proton translocation. Component of the F(0) channel, it forms part of the peripheral stalk, linking F(1) to F(0). This chain is ATP synthase subunit b, found in Chlorobaculum tepidum (strain ATCC 49652 / DSM 12025 / NBRC 103806 / TLS) (Chlorobium tepidum).